Here is a 743-residue protein sequence, read N- to C-terminus: Glycerol-3-phosphate O-acyltransferase 2 (743 aa).

Residues Met1–Asn34 are Lumenal-facing. Residues Ile35–Phe55 form a helical membrane-spanning segment. The Cytoplasmic segment spans residues Arg56–Val442. A helical transmembrane segment spans residues Thr443–Leu457. Residue Ser458 is a topological domain, lumenal. The helical transmembrane segment at Leu459–Arg473 threads the bilayer. Over Val474 to Lys501 the chain is Cytoplasmic. Residues Leu502–Ile522 form a helical membrane-spanning segment. Residues Leu523–Arg531 lie on the Lumenal side of the membrane. Residues Ile532–Phe552 form a helical membrane-spanning segment. The Cytoplasmic portion of the chain corresponds to Thr553–Glu743. Phosphoserine occurs at positions 632, 637, 647, 651, 654, 657, 664, 668, and 671. The residue at position 673 (Thr673) is a Phosphothreonine. Residues Lys682 to Glu743 are disordered. Ser688 is subject to Phosphoserine. Positions Glu691–Asp700 are enriched in acidic residues. Position 692 is a phosphothreonine (Thr692). Ser693 carries the phosphoserine modification.

Belongs to the GPAT/DAPAT family. Post-translationally, phosphorylated at a conserved motif involving Ser-664, Ser-668 and Ser-671. This phosphorylation plays a critical role for efficient TAG mobilization. Phosphorylation deficiency at this motif increases the enzyme activity and consequently induces de novo formation of phosphatidic acid.

The protein resides in the lipid droplet. Its subcellular location is the endoplasmic reticulum membrane. It carries out the reaction sn-glycerol 3-phosphate + an acyl-CoA = a 1-acyl-sn-glycero-3-phosphate + CoA. It catalyses the reaction dihydroxyacetone phosphate + an acyl-CoA = a 1-acylglycerone 3-phosphate + CoA. The catalysed reaction is sn-glycerol 3-phosphate + hexadecanoyl-CoA = 1-hexadecanoyl-sn-glycero-3-phosphate + CoA. The enzyme catalyses (9Z)-hexadecenoyl-CoA + sn-glycerol 3-phosphate = 1-(9Z-hexadecenoyl)-sn-glycero-3-phosphate + CoA. It carries out the reaction sn-glycerol 3-phosphate + octadecanoyl-CoA = 1-octadecanoyl-sn-glycero-3-phosphate + CoA. It catalyses the reaction sn-glycerol 3-phosphate + (9Z)-octadecenoyl-CoA = 1-(9Z-octadecenoyl)-sn-glycero-3-phosphate + CoA. The protein operates within phospholipid metabolism; CDP-diacylglycerol biosynthesis; CDP-diacylglycerol from sn-glycerol 3-phosphate: step 1/3. Dual substrate-specific glycerol-3-phosphate/dihydroxyacetone phosphate sn-1 acyltransferase, catalyzing the first and committed reaction in the de novo synthesis of glycerophospholipids and triacylglycerols (TAGs). Can use both Gly-3-P and dihydroxyacetone phosphate with similar efficiencies and has a broad fatty acyl-CoA specificity profile. Transfers a fatty acid from fatty acyl-CoA to the sn-1 position of glycerol-3-phosphate to produce lysophosphatidic acid (LysoPA). These lipids not only are precursors of glycerolipids, but also are dynamic components of signal transduction systems that control cell physiology. The chain is Glycerol-3-phosphate O-acyltransferase 2 (GPT2) from Saccharomyces cerevisiae (strain ATCC 204508 / S288c) (Baker's yeast).